The primary structure comprises 315 residues: Neuroguidin (315 aa).

Disordered stretches follow at residues 127–201 and 289–315; these read SEND…KQKR and VQDIGNPKPKKKKIIKKGKKKVFRKRK. Basic and acidic residues-rich tracts occupy residues 159–168 and 182–200; these read KTKEQKEPSG and YDGDLTEADRQKERVEKQK. A coiled-coil region spans residues 181–206; the sequence is HYDGDLTEADRQKERVEKQKRAALRS. Residues 296 to 315 are compositionally biased toward basic residues; it reads KPKKKKIIKKGKKKVFRKRK.

This sequence belongs to the SAS10 family. As to quaternary structure, part of the small subunit (SSU) processome, composed of more than 70 proteins and the RNA chaperone small nucleolar RNA (snoRNA) U3.

Its subcellular location is the nucleus. It is found in the nucleolus. The protein resides in the chromosome. It localises to the centromere. The protein localises to the cytoplasm. Its subcellular location is the cell projection. It is found in the axon. The protein resides in the dendrite. It localises to the filopodium. In terms of biological role, part of the small subunit (SSU) processome, first precursor of the small eukaryotic ribosomal subunit. During the assembly of the SSU processome in the nucleolus, many ribosome biogenesis factors, an RNA chaperone and ribosomal proteins associate with the nascent pre-rRNA and work in concert to generate RNA folding, modifications, rearrangements and cleavage as well as targeted degradation of pre-ribosomal RNA by the RNA exosome. Its dissociation from the complex determines the transition from state pre-A1 to state pre-A1*. May inhibit mRNA translation. The polypeptide is Neuroguidin (ngdn) (Danio rerio (Zebrafish)).